Here is a 422-residue protein sequence, read N- to C-terminus: MTKDFKISVSAALISALFSSPYAFANNDEVHFTAVQISPNADPDSHVVIFQPAAEALGGTNALAKSIHSIAVGASAEAAKQAAVAVGAGSIATGVNSVAIGPLSKALGDSAVTYGAASTAQKDGVAIGARAFTSDTGVAVGFNSKVDAKNSVAIGHSSHVAVDHDYSIAIGDRSKTDRKNSVSIGHESLNRQLTHLAAGTKDTDAVNVAQLKKEIEKTQVNANKKSAEVLGIANNYTDSKSAETLENARKEAFDLSNDALDMAKKHSNSVARTTLETAEEHTNKKSAETLARANVYADSKSSHTLQTANSYTDVTVSNSTKKAIRESNQYTDHKFRQLDNRLDKLDTRVDKGLASSAALNSLFQPYGVGKVNFTAGVGGYRSSQALAIGSGYRVNESVALKAGVAYAGSSDVMYNASFNIEW.

The N-terminal stretch at 1–25 (MTKDFKISVSAALISALFSSPYAFA) is a signal peptide. The interval 26-330 (NNDEVHFTAV…KKAIRESNQY (305 aa)) is surface exposed passenger domain. The stretch at 206–236 (VNVAQLKKEIEKTQVNANKKSAEVLGIANNY) forms a coiled coil. The interval 331-368 (TDHKFRQLDNRLDKLDTRVDKGLASSAALNSLFQPYGV) is outer membrane translocation of the passenger domain. Transmembrane regions (beta stranded) follow at residues 369-379 (GKVNFTAGVGG), 383-394 (SQALAIGSGYRV), 401-407 (KAGVAYA), and 411-422 (DVMYNASFNIEW). The translocator domain stretch occupies residues 369 to 422 (GKVNFTAGVGGYRSSQALAIGSGYRVNESVALKAGVAYAGSSDVMYNASFNIEW).

This sequence belongs to the autotransporter-2 (AT-2) (TC 1.B.40) family. In terms of assembly, homotrimer; trimers are very stable, not disrupted by heating at 95 degrees Celsius for 10 minutes in SDS sample buffer.

Its subcellular location is the cell surface. The protein localises to the cell outer membrane. Its function is as follows. Collagen-binding outer membrane protein forming a fibrillar matrix on the bacterial cell surface and phagocytosis resistance. Promotes initial attachment and invasion of eukaryotic cells. Also protects the bacteria by being responsible for agglutination, serum resistance and complement inactivation. Gly-389 plays an important role in this protein; replacing it with increasingly large polar residues decreases expression levels and trimer stability. Residues larger than Ser (Thr, Asn or His) significantly decrease serume resistance and bacterial autoagglution without affecting adhesion to host cells or host cell cytokine production. The chain is Adhesin YadA from Yersinia enterocolitica serotype O:8 / biotype 1B (strain NCTC 13174 / 8081).